We begin with the raw amino-acid sequence, 121 residues long: Large ribosomal subunit protein eL31 (121 aa).

The protein belongs to the eukaryotic ribosomal protein eL31 family.

The chain is Large ribosomal subunit protein eL31 (RPL31) from Panax ginseng (Korean ginseng).